The sequence spans 354 residues: Ferredoxin--NADP reductase (354 aa).

FAD-binding residues include aspartate 42, glutamine 50, tyrosine 55, isoleucine 95, phenylalanine 130, aspartate 299, and threonine 339.

Belongs to the ferredoxin--NADP reductase type 2 family. In terms of assembly, homodimer. FAD serves as cofactor.

The catalysed reaction is 2 reduced [2Fe-2S]-[ferredoxin] + NADP(+) + H(+) = 2 oxidized [2Fe-2S]-[ferredoxin] + NADPH. In Acidovorax sp. (strain JS42), this protein is Ferredoxin--NADP reductase.